Here is a 299-residue protein sequence, read N- to C-terminus: Cuticle collagen 34 (299 aa).

A disordered region spans residues 105–282; it reads PGPAGTPGKP…GSPGERGICP (178 aa). Residues 129–162 are compositionally biased toward pro residues; it reads PGRPPQQPCEPITPPPCKPCPQGPPGPPGPPGPP. Residues 164 to 181 show a composition bias toward low complexity; it reads DSGEPGSPGLPGQDAAPG. 2 stretches are compositionally biased toward pro residues: residues 182–195 and 215–233; these read EPGP…PGAP and PGEP…PGSP. Residues 216–278 form a triple-helical region region; that stretch reads GEPGPPGEAG…AGPPGSPGER (63 aa). Over residues 251 to 263 the composition is skewed to low complexity; that stretch reads NGPDGQPGADGNP. The segment covering 265–274 has biased composition (pro residues); sequence APGPAGPPGS.

It belongs to the cuticular collagen family. Collagen polypeptide chains are complexed within the cuticle by disulfide bonds and other types of covalent cross-links.

Functionally, nematode cuticles are composed largely of collagen-like proteins. The cuticle functions both as an exoskeleton and as a barrier to protect the worm from its environment. The polypeptide is Cuticle collagen 34 (col-34) (Caenorhabditis elegans).